The following is a 248-amino-acid chain: tRNA uridine(34) hydroxylase (248 aa).

Residues 127–221 form the Rhodanese domain; sequence RGRPLVLLDT…YFEEVGGEGY (95 aa). Cysteine 181 acts as the Cysteine persulfide intermediate in catalysis.

It belongs to the TrhO family.

It catalyses the reaction uridine(34) in tRNA + AH2 + O2 = 5-hydroxyuridine(34) in tRNA + A + H2O. Catalyzes oxygen-dependent 5-hydroxyuridine (ho5U) modification at position 34 in tRNAs. The protein is tRNA uridine(34) hydroxylase of Xanthomonas axonopodis pv. citri (strain 306).